Here is a 222-residue protein sequence, read N- to C-terminus: PKHD-type hydroxylase Syncc9902_2001 (222 aa).

The Fe2OG dioxygenase domain maps to 80–174 (RVHSILISRS…RLVCVGWIES (95 aa)). Residues His98, Asp100, and His155 each coordinate Fe cation. Arg165 lines the 2-oxoglutarate pocket.

Fe(2+) is required as a cofactor. The cofactor is L-ascorbate.

The chain is PKHD-type hydroxylase Syncc9902_2001 from Synechococcus sp. (strain CC9902).